The primary structure comprises 936 residues: MTTGFLQKIFGSRNQRLVKQYQKTVTAINALEPQIEQLTDDQLRAKTGEFRQRVASGESLDKLLPEAFAVCREASKRVLKMRHFDVQLIGGMVLHYGKIGEMRTGEGKTLVATLPVYLNALSGRGVHVVTVNDYLAQRDAEWMARLYNFLGLSVGINLSQMDHGAKQEAYAADITYGTNNEFGFDYLRDNMVYETDARVQRALNFAVVDEVDSILIDEARTPLIISGQAEDHTDLYVRMNALPPLLERQIGEEKADGTGVERPGDYTLDEKGRQVFLTESGHEKAERLLAEWGLIGEGESLYAPQNITLMHHVYAALRAHTLFFKDQHYVVQNGEVVIVDEFTGRLMSGRRWSDGLHQAVEAKEHVKIQSENQTLASITFQNYFRMYAKLSGMTGTADTEAFEFNEIYGLETVVIPTNRPPKRIDKQDQIYKTAKERYDAVIRDIRDCYERGQPVLVGTTSIENSELLSHLLKQAGLPHEVLNAKQHAREAEIVAEAGRPKRVTIATNMAGRGTDIVLGGNAEKQASFIEKDETLSEEEKQRRIQKLHDEWQALHDQVKAAGGLHIIGTERHESRRIDNQLRGRAGRQGDPGSSRFYLSLEDPLLRIFAGDRVRAIMDRLKMPEGEAIEAGIVSRSIESAQRKVEARNFDVRKQLLEYDDVSNDQRKVIYQQRNELLEANDITETIGAMRQSVIGEIVHQFVPVGSIEEQWDVPELEEVLRNEWQLDLAIQEMINESNSISADEILEAVEAAADEAYEAKVELVGRESFSAFERSIMLQTLDRSWREHLAALDHLRQGIHLRGYAQKNPKQEYKREAFELFAAMLDAVKLEVTRVVMNVQIQSPEQLEQAAEQLEEQGGHLENVEFRHAEFAEAAAAAPVAAEAATAAMIGDAMSHGSSHTAAANLSADNVPKVGRNDPCPCGSGKKYKQCHGKIV.

Residues Q87, 105–109 (GEGKT), and D515 each bind ATP. Residues C920, C922, C931, and H932 each coordinate Zn(2+).

Belongs to the SecA family. Monomer and homodimer. Part of the essential Sec protein translocation apparatus which comprises SecA, SecYEG and auxiliary proteins SecDF-YajC and YidC. The cofactor is Zn(2+).

The protein localises to the cell inner membrane. It is found in the cytoplasm. It carries out the reaction ATP + H2O + cellular proteinSide 1 = ADP + phosphate + cellular proteinSide 2.. In terms of biological role, part of the Sec protein translocase complex. Interacts with the SecYEG preprotein conducting channel. Has a central role in coupling the hydrolysis of ATP to the transfer of proteins into and across the cell membrane, serving both as a receptor for the preprotein-SecB complex and as an ATP-driven molecular motor driving the stepwise translocation of polypeptide chains across the membrane. In Paraburkholderia phytofirmans (strain DSM 17436 / LMG 22146 / PsJN) (Burkholderia phytofirmans), this protein is Protein translocase subunit SecA.